Here is a 134-residue protein sequence, read N- to C-terminus: NAD(P)H-quinone oxidoreductase subunit 3 (134 aa).

The next 3 helical transmembrane spans lie at G20 to V40, M78 to V98, and L103 to A123.

The protein belongs to the complex I subunit 3 family. In terms of assembly, NDH-1 can be composed of about 15 different subunits; different subcomplexes with different compositions have been identified which probably have different functions.

It localises to the cellular thylakoid membrane. It catalyses the reaction a plastoquinone + NADH + (n+1) H(+)(in) = a plastoquinol + NAD(+) + n H(+)(out). The enzyme catalyses a plastoquinone + NADPH + (n+1) H(+)(in) = a plastoquinol + NADP(+) + n H(+)(out). Functionally, NDH-1 shuttles electrons from an unknown electron donor, via FMN and iron-sulfur (Fe-S) centers, to quinones in the respiratory and/or the photosynthetic chain. The immediate electron acceptor for the enzyme in this species is believed to be plastoquinone. Couples the redox reaction to proton translocation, and thus conserves the redox energy in a proton gradient. Cyanobacterial NDH-1 also plays a role in inorganic carbon-concentration. The protein is NAD(P)H-quinone oxidoreductase subunit 3 of Prochlorococcus marinus (strain MIT 9303).